We begin with the raw amino-acid sequence, 437 residues long: Vacuolar protein sorting-associated protein 4A (437 aa).

The MIT domain maps to 2–80 (TTSTLQKAID…KDYLRNKEKH (79 aa)). Residue K8 is modified to N6-acetyllysine. Residues 15–37 (KATEEDKAKNYEEALRLYQHAVE) are a coiled coil. The segment at 75 to 106 (RNKEKHGKKPVKENQSEGKGSDSDSEGDNPEK) is disordered. Over residues 84-96 (PVKENQSEGKGSD) the composition is skewed to basic and acidic residues. Phosphoserine occurs at positions 95 and 97. Position 167–174 (167–174 (GPPGTGKS)) interacts with ATP.

The protein belongs to the AAA ATPase family. Proposed to be monomeric or homodimeric in nucleotide-free form and to oligomerize upon binding to ATP to form two stacked hexameric or heptameric rings with a central pore through which ESCRT-III substrates are translocated in an ATP-dependent manner. Interacts with CHMP1A, CHMP1B, CHMP2A, CHMP2B, CHMP3, CHMP4A, CHMP4B, CHMP4C and CHMP6. Interacts with VPS4B; the interaction suggests a heteromeric assembly with VPS4B. Interacts with SPAST. Interacts with IST1. Interacts with ZFYVE19/ANCHR; leading to retain it at midbody. As to expression, highly expressed in testis and moderately in heart and brain. Not detected in spleen, lung, liver, skeletal muscle or kidney.

The protein localises to the late endosome membrane. The protein resides in the midbody. Its subcellular location is the cytoplasm. It localises to the cytoskeleton. It is found in the spindle. The enzyme catalyses ATP + H2O = ADP + phosphate + H(+). Its function is as follows. Involved in late steps of the endosomal multivesicular bodies (MVB) pathway. Recognizes membrane-associated ESCRT-III assemblies and catalyzes their disassembly, possibly in combination with membrane fission. Redistributes the ESCRT-III components to the cytoplasm for further rounds of MVB sorting. MVBs contain intraluminal vesicles (ILVs) that are generated by invagination and scission from the limiting membrane of the endosome and mostly are delivered to lysosomes enabling degradation of membrane proteins, such as stimulated growth factor receptors, lysosomal enzymes and lipids. It is required for proper accomplishment of various processes including the regulation of endosome size, primary cilium organization, mitotic spindle organization and chromosome segregation, and nuclear envelope sealing and spindle disassembly during anaphase. In conjunction with the ESCRT machinery also appears to function in topologically equivalent membrane fission events, such as the terminal stages of cytokinesis. Involved in cytokinesis: retained at the midbody by ZFYVE19/ANCHR and CHMP4C until abscission checkpoint signaling is terminated at late cytokinesis. It is then released following dephosphorylation of CHMP4C, leading to abscission. VPS4A/B are required for the exosomal release of SDCBP, CD63 and syndecan. Critical for normal erythroblast cytokinesis and correct erythropoiesis. This Mus musculus (Mouse) protein is Vacuolar protein sorting-associated protein 4A.